Here is a 129-residue protein sequence, read N- to C-terminus: Prefoldin subunit 6 (129 aa).

Coiled coils occupy residues 6-26 and 84-118; these read VRDL…IQKD and IEYI…LQQR.

The protein belongs to the prefoldin subunit beta family. In terms of assembly, heterohexamer of two PFD-alpha type and four PFD-beta type subunits forming prefoldin co-chaperone complex. Interacts with PFD2, PFD3, PFD4 and PFD5. Interacts with LSM8, a specific subunit of the LSM2-8 complex, which is a core component of the spliceosome. Binds to HSP90 to facilitate the formation of a larger complex made at least of HSP90, PFD6 and LSM8.

It localises to the cytoplasm. It is found in the nucleus. Functionally, binds specifically to cytosolic chaperonin (c-CPN) and transfers target proteins to it. Binds to nascent polypeptide chain and promotes folding in an environment in which there are many competing pathways for nonnative proteins. Together with other chaperonins, contribute to the regulation of gene expression by modulating the spliceosome function on pre-mRNA splicing post-transcriptionally by acting as a co-chaperone of Hsp90 to control levels of LSM8. Required for the biogenesis of tubulins and for subsequent microtubules (MTs) organization and dynamicity, but unable to associate with microtubules. Involved in the process leading to microtubules dissociation in response to gibberellic acid (GA) probably due to the DELLA proteins-mediated translocation of the prefoldin co-chaperone complex from the cytoplasm to the nucleus. Contributes to the GA-dependent regulation of PIN2 trafficking at the plasma membrane, thus influencing auxin flux. This chain is Prefoldin subunit 6, found in Arabidopsis thaliana (Mouse-ear cress).